Here is a 143-residue protein sequence, read N- to C-terminus: Putative aryl-alcohol dehydrogenase AAD15 (143 aa).

The protein belongs to the aldo/keto reductase family. Aldo/keto reductase 2 subfamily.

In terms of biological role, putative aryl-alcohol dehydrogenase. This is Putative aryl-alcohol dehydrogenase AAD15 (AAD15) from Saccharomyces cerevisiae (strain ATCC 204508 / S288c) (Baker's yeast).